Reading from the N-terminus, the 135-residue chain is Ribonuclease P protein component 2 (135 aa).

Belongs to the eukaryotic/archaeal RNase P protein component 2 family. In terms of assembly, consists of a catalytic RNA component and at least 4-5 protein subunits.

The protein localises to the cytoplasm. The enzyme catalyses Endonucleolytic cleavage of RNA, removing 5'-extranucleotides from tRNA precursor.. Functionally, part of ribonuclease P, a protein complex that generates mature tRNA molecules by cleaving their 5'-ends. The sequence is that of Ribonuclease P protein component 2 from Methanosarcina barkeri (strain Fusaro / DSM 804).